The following is a 94-amino-acid chain: uncharacterized protein (94 aa).

Its function is as follows. Could be a silencing control element for the regulation of the restriction system. This is an uncharacterized protein from Herpetosiphon aurantiacus (Herpetosiphon giganteus).